A 293-amino-acid polypeptide reads, in one-letter code: Probable endonuclease 4 (293 aa).

Zn(2+) contacts are provided by His77, His118, Glu153, Asp187, His190, His221, Asp234, His236, and Glu266.

The protein belongs to the AP endonuclease 2 family. Zn(2+) is required as a cofactor.

The enzyme catalyses Endonucleolytic cleavage to 5'-phosphooligonucleotide end-products.. Endonuclease IV plays a role in DNA repair. It cleaves phosphodiester bonds at apurinic or apyrimidinic (AP) sites, generating a 3'-hydroxyl group and a 5'-terminal sugar phosphate. The chain is Probable endonuclease 4 from Mesoplasma florum (strain ATCC 33453 / NBRC 100688 / NCTC 11704 / L1) (Acholeplasma florum).